The following is a 133-amino-acid chain: Large ribosomal subunit protein uL22c (133 aa).

Belongs to the universal ribosomal protein uL22 family. In terms of assembly, part of the 50S ribosomal subunit.

Its subcellular location is the plastid. The protein localises to the chloroplast. This protein binds specifically to 23S rRNA. Its function is as follows. The globular domain of the protein is located near the polypeptide exit tunnel on the outside of the subunit, while an extended beta-hairpin is found that lines the wall of the exit tunnel in the center of the 70S ribosome. This chain is Large ribosomal subunit protein uL22c (rpl22), found in Manihot esculenta (Cassava).